A 190-amino-acid polypeptide reads, in one-letter code: Dynein axonemal light chain 1 (190 aa).

LRR repeat units lie at residues 49 to 70, 71 to 92, 94 to 115, and 116 to 137; these read VCEK…NGLK, NLKI…EAVG, SLEE…HVLK, and KLKV…NKLQ. The 41-residue stretch at 150–190 folds into the LRRCT domain; that stretch reads NPLEEKHSAEGDWQDRVTKSLKALKKLDGTPIIKNDEEEED.

It belongs to the dynein light chain LC1-type family. Interacts with DNAH5, a outer arm dynein heavy chain. Interacts with tubulin located within the A-tubule of the outer doublets in a ATP-independent manner.

It is found in the cytoplasm. The protein resides in the cytoskeleton. The protein localises to the cilium axoneme. Its function is as follows. Part of the multisubunit axonemal ATPase complexes that generate the force for cilia motility and govern beat frequency. Component of the outer arm dynein (ODA). May be involved in a mechanosensory feedback mechanism controlling ODA activity based on external conformational cues by tethering the outer arm dynein heavy chain (DNAH5) to the microtubule within the axoneme. In Ciona intestinalis (Transparent sea squirt), this protein is Dynein axonemal light chain 1 (DNAL1).